The following is a 280-amino-acid chain: Dermonecrotic toxin LsSicTox-alphaIA1 (280 aa).

H12 is an active-site residue. Mg(2+) is bound by residues E32 and D34. The active-site Nucleophile is the H48. Intrachain disulfides connect C52–C58 and C54–C197. D92 is a Mg(2+) binding site.

Belongs to the arthropod phospholipase D family. Class II subfamily. Mg(2+) serves as cofactor. Expressed by the venom gland.

It is found in the secreted. The catalysed reaction is an N-(acyl)-sphingosylphosphocholine = an N-(acyl)-sphingosyl-1,3-cyclic phosphate + choline. It catalyses the reaction an N-(acyl)-sphingosylphosphoethanolamine = an N-(acyl)-sphingosyl-1,3-cyclic phosphate + ethanolamine. It carries out the reaction a 1-acyl-sn-glycero-3-phosphocholine = a 1-acyl-sn-glycero-2,3-cyclic phosphate + choline. The enzyme catalyses a 1-acyl-sn-glycero-3-phosphoethanolamine = a 1-acyl-sn-glycero-2,3-cyclic phosphate + ethanolamine. Functionally, dermonecrotic toxins cleave the phosphodiester linkage between the phosphate and headgroup of certain phospholipids (sphingolipid and lysolipid substrates), forming an alcohol (often choline) and a cyclic phosphate. This toxin acts on sphingomyelin (SM). It may also act on ceramide phosphoethanolamine (CPE), lysophosphatidylcholine (LPC) and lysophosphatidylethanolamine (LPE), but not on lysophosphatidylserine (LPS), and lysophosphatidylglycerol (LPG). It acts by transphosphatidylation, releasing exclusively cyclic phosphate products as second products. Induces dermonecrosis, hemolysis, increased vascular permeability, edema, inflammatory response, and platelet aggregation. This Loxosceles similis (Brazilian brown spider) protein is Dermonecrotic toxin LsSicTox-alphaIA1.